The following is a 300-amino-acid chain: Fructose-bisphosphate aldolase class 1 (300 aa).

E181 acts as the Proton acceptor in catalysis. The active-site Schiff-base intermediate with dihydroxyacetone-P is K218.

It belongs to the class I fructose-bisphosphate aldolase family.

The catalysed reaction is beta-D-fructose 1,6-bisphosphate = D-glyceraldehyde 3-phosphate + dihydroxyacetone phosphate. Its pathway is carbohydrate degradation; glycolysis; D-glyceraldehyde 3-phosphate and glycerone phosphate from D-glucose: step 4/4. This chain is Fructose-bisphosphate aldolase class 1 (fda), found in Synechocystis sp. (strain ATCC 27184 / PCC 6803 / Kazusa).